We begin with the raw amino-acid sequence, 1452 residues long: CLIP-associating protein 1 (1452 aa).

3 HEAT repeats span residues 68–87 (LLGM…RFRS), 88–124 (QIGT…QASN), and 163–200 (LTLS…HVGE). The interval 239 to 299 (KNFDDEDSVD…GTAKEGAGGV (61 aa)) is disordered. The segment covering 253–267 (SSASSSASSKAPQAA) has biased composition (low complexity). 2 HEAT repeats span residues 407–442 (HGAE…IRQT) and 443–479 (HVPR…EWQT). 2 disordered regions span residues 545-735 (SDSI…GISQ) and 771-792 (YGMY…ERSY). Residues 550–569 (SLPQSDRSSSSSQESLNRPL) are compositionally biased toward low complexity. Polar residues predominate over residues 573-597 (RSPTGSTVSRASTATSKSTPGSLQR). Composition is skewed to low complexity over residues 606 to 621 (AATC…ASAA), 645 to 659 (QSSG…TPAD), and 668 to 682 (VVSQ…SSPG). A compositionally biased stretch (polar residues) spans 715-724 (QGCSRETSPS). A compositionally biased stretch (low complexity) spans 781-792 (SDASSACSERSY). One copy of the HEAT 6 repeat lies at 926-963 (QQFNILMRFIVDQTQTPNLKVKVAILKYIESLARQMDP). Residues 1033–1076 (LKNSSNSSMGSPSNTIGRTPSRHSSSRASPLTSPTNCSHGGLSP) form a disordered region. The span at 1034-1046 (KNSSNSSMGSPSN) shows a compositional bias: low complexity. Residues 1058–1070 (SRASPLTSPTNCS) are compositionally biased toward polar residues. 2 HEAT repeats span residues 1256 to 1293 (EHFK…NQPA) and 1374 to 1411 (QILP…VIGE).

Belongs to the CLASP family. Interacts (via C-terminus) with clip1/clip-170, and cenpe.

It is found in the cytoplasm. The protein localises to the cytoskeleton. Its subcellular location is the microtubule organizing center. It localises to the centrosome. The protein resides in the chromosome. It is found in the centromere. The protein localises to the kinetochore. Its subcellular location is the spindle. It localises to the golgi apparatus. The protein resides in the trans-Golgi network. Functionally, microtubule plus-end tracking protein that promotes the stabilization of dynamic microtubules during anaphase. Plays a crucial role in chromatin-induced microtubule formation. May also act at microtubule minus ends. May be involved in the nucleation of noncentrosomal microtubules originating from the trans-Golgi network (TGN). The polypeptide is CLIP-associating protein 1 (Xenopus tropicalis (Western clawed frog)).